The sequence spans 757 residues: Chloride anion exchanger (757 aa).

The Cytoplasmic portion of the chain corresponds to 1-71 (MIEAIGNQYV…SWLPAYKIKE (71 aa)). The chain crosses the membrane as a helical span at residues 72–92 (WLLSDIVSGISTGLVAVLQGL). Position 93 (Ala-93) is a topological domain, extracellular. Residues 94–114 (FALLVNIPPAYGLYAAFFPVI) form a helical membrane-spanning segment. The Cytoplasmic portion of the chain corresponds to 115 to 124 (TYFFLGTSRH). Residues 125-145 (ISVGPFPVLSMMVGVVVTRVV) form a helical membrane-spanning segment. Residues 146–176 (SDPNASSELSSSSTENDSFIEEKVMVAASVT) lie on the Extracellular side of the membrane. Residues Asn-149 and Asn-161 are each glycosylated (N-linked (GlcNAc...) asparagine). The helical transmembrane segment at 177–197 (VLSGIIQLLLGVLQVGFVVIY) threads the bilayer. At 198–201 (LSES) the chain is on the cytoplasmic side. The chain crosses the membrane as a helical span at residues 202 to 222 (LISGFTTAAAIHVLVSQLKFM). At 223-250 (LQLPVPAYSDPFSIFKVLESVFTQIQKT) the chain is on the extracellular side. Residues 251–271 (NIADLVTSVIILVVVFVFKEI) traverse the membrane as a helical segment. Over 272–278 (NQRYRSK) the chain is Cytoplasmic. The helical transmembrane segment at 279 to 299 (LPVPIPIELIMTVIATGVSYG) threads the bilayer. Residues 300 to 335 (CNFEDRFGVAVVGNMSLGFQPPITPSVEVFQDTIGD) lie on the Extracellular side of the membrane. The helical transmembrane segment at 336–356 (SFGIAIVGFAVAFSVASVYSL) threads the bilayer. Over 357 to 367 (KYDYPIDGNQE) the chain is Cytoplasmic. The chain crosses the membrane as a helical span at residues 368–388 (LIALGVSNIFTGAFKGFAGST). The Extracellular portion of the chain corresponds to 389–404 (ALSRSGVQESTGGKTQ). The chain crosses the membrane as a helical span at residues 405-425 (VAGLLSAVIVLIVIVAIGFLL). The Cytoplasmic portion of the chain corresponds to 426–462 (QPLQKSVLAALALGNLKGMLMQFAEIGRLWKKDKYDC). A helical transmembrane segment spans residues 463 to 483 (LIWIMTFIFAIVLGLGLGLAA). Residues 484–757 (SVAFQLLTIV…ECQVPVETKF (274 aa)) lie on the Extracellular side of the membrane. One can recognise an STAS domain in the interval 518 to 713 (NYAEVYEPEG…LTIHDAILHI (196 aa)). The PDZ-binding signature appears at 754–757 (ETKF).

Belongs to the SLC26A/SulP transporter (TC 2.A.53) family. In terms of assembly, interacts with PDZK1. Interacts with CFTR, SLC26A6 and NHERF1. Interacts (via PDZ-binding motif) with NHERF4 (via the third PDZ domain). This interaction leads to decreased expression of SLC26A3 on the cell membrane resulting in its reduced exchanger activity. In terms of processing, N-glycosylation is required for efficient cell surface expression, and protection from proteolytic degradation. In terms of tissue distribution, expressed in spermatogenic cells. Expressed at high levels in cecum and colon and at lower levels in small intestine.

Its subcellular location is the apical cell membrane. It is found in the membrane. The protein resides in the cell membrane. The enzyme catalyses hydrogencarbonate(in) + 2 chloride(out) = hydrogencarbonate(out) + 2 chloride(in). Functionally, mediates chloride-bicarbonate exchange with a chloride bicarbonate stoichiometry of 2:1 in the intestinal epithelia. Plays a role in the chloride and bicarbonate homeostasis during sperm epididymal maturation and capacitation. This chain is Chloride anion exchanger (Slc26a3), found in Mus musculus (Mouse).